The following is a 409-amino-acid chain: Dihydroorotase (409 aa).

Zn(2+) is bound by residues His57 and His59. Residues 59-61 and Asn91 each bind substrate; that span reads HLR. 4 residues coordinate Zn(2+): Lys139, His168, His208, and Asp276. N6-carboxylysine is present on Lys139. The active site involves Asp276. Residues His280 and 290–291 contribute to the substrate site; that span reads AG.

It belongs to the metallo-dependent hydrolases superfamily. DHOase family. Class I DHOase subfamily. Zn(2+) is required as a cofactor.

The catalysed reaction is (S)-dihydroorotate + H2O = N-carbamoyl-L-aspartate + H(+). The protein operates within pyrimidine metabolism; UMP biosynthesis via de novo pathway; (S)-dihydroorotate from bicarbonate: step 3/3. Catalyzes the reversible cyclization of carbamoyl aspartate to dihydroorotate. The polypeptide is Dihydroorotase (Thermococcus kodakarensis (strain ATCC BAA-918 / JCM 12380 / KOD1) (Pyrococcus kodakaraensis (strain KOD1))).